The chain runs to 117 residues: Large ribosomal subunit protein bL19 (117 aa).

This sequence belongs to the bacterial ribosomal protein bL19 family.

In terms of biological role, this protein is located at the 30S-50S ribosomal subunit interface and may play a role in the structure and function of the aminoacyl-tRNA binding site. The sequence is that of Large ribosomal subunit protein bL19 from Shewanella woodyi (strain ATCC 51908 / MS32).